Reading from the N-terminus, the 381-residue chain is Homoserine O-acetyltransferase (381 aa).

Positions 47–359 (NAILICHALT…DKGHDAFLLD (313 aa)) constitute an AB hydrolase-1 domain. Catalysis depends on Ser-153, which acts as the Nucleophile. Residue Arg-223 coordinates substrate. Residues Asp-320 and His-353 contribute to the active site. Asp-354 contacts substrate.

The protein belongs to the AB hydrolase superfamily. MetX family. As to quaternary structure, homodimer.

The protein resides in the cytoplasm. It catalyses the reaction L-homoserine + acetyl-CoA = O-acetyl-L-homoserine + CoA. The protein operates within amino-acid biosynthesis; L-methionine biosynthesis via de novo pathway; O-acetyl-L-homoserine from L-homoserine: step 1/1. Functionally, transfers an acetyl group from acetyl-CoA to L-homoserine, forming acetyl-L-homoserine. This chain is Homoserine O-acetyltransferase, found in Acidiphilium cryptum (strain JF-5).